Reading from the N-terminus, the 231-residue chain is 2-C-methyl-D-erythritol 4-phosphate cytidylyltransferase (231 aa).

This sequence belongs to the IspD/TarI cytidylyltransferase family. IspD subfamily.

The enzyme catalyses 2-C-methyl-D-erythritol 4-phosphate + CTP + H(+) = 4-CDP-2-C-methyl-D-erythritol + diphosphate. It functions in the pathway isoprenoid biosynthesis; isopentenyl diphosphate biosynthesis via DXP pathway; isopentenyl diphosphate from 1-deoxy-D-xylulose 5-phosphate: step 2/6. Its function is as follows. Catalyzes the formation of 4-diphosphocytidyl-2-C-methyl-D-erythritol from CTP and 2-C-methyl-D-erythritol 4-phosphate (MEP). The protein is 2-C-methyl-D-erythritol 4-phosphate cytidylyltransferase of Shewanella piezotolerans (strain WP3 / JCM 13877).